Consider the following 392-residue polypeptide: DNA replication and repair protein RecF (392 aa).

30 to 37 (GRNGFGKT) serves as a coordination point for ATP.

Belongs to the RecF family.

The protein localises to the cytoplasm. Functionally, the RecF protein is involved in DNA metabolism; it is required for DNA replication and normal SOS inducibility. RecF binds preferentially to single-stranded, linear DNA. It also seems to bind ATP. This is DNA replication and repair protein RecF from Corynebacterium aurimucosum (strain ATCC 700975 / DSM 44827 / CIP 107346 / CN-1) (Corynebacterium nigricans).